A 106-amino-acid polypeptide reads, in one-letter code: uncharacterized protein (106 aa).

A run of 2 helical transmembrane segments spans residues 10–30 (VYIQMVAFSPYRIVLPFVAFV) and 65–85 (LDFASAFVVPAASFVESLLAY).

It is found in the membrane. This is an uncharacterized protein from Saccharomyces cerevisiae (strain ATCC 204508 / S288c) (Baker's yeast).